A 464-amino-acid chain; its full sequence is Anthranilate synthase component 1 (464 aa).

L-tryptophan-binding positions include Ser-41 and 236 to 238 (PYM). Chorismate is bound at residue 271 to 272 (GT). Residue Glu-298 participates in Mg(2+) binding. Chorismate contacts are provided by residues Tyr-386, Arg-406, 420-422 (GAG), and Gly-422. Glu-435 serves as a coordination point for Mg(2+).

This sequence belongs to the anthranilate synthase component I family. Heterotetramer consisting of two non-identical subunits: a beta subunit (TrpG) and a large alpha subunit (TrpE). It depends on Mg(2+) as a cofactor.

It carries out the reaction chorismate + L-glutamine = anthranilate + pyruvate + L-glutamate + H(+). It functions in the pathway amino-acid biosynthesis; L-tryptophan biosynthesis; L-tryptophan from chorismate: step 1/5. Feedback inhibited by tryptophan. In terms of biological role, part of a heterotetrameric complex that catalyzes the two-step biosynthesis of anthranilate, an intermediate in the biosynthesis of L-tryptophan. In the first step, the glutamine-binding beta subunit (TrpG) of anthranilate synthase (AS) provides the glutamine amidotransferase activity which generates ammonia as a substrate that, along with chorismate, is used in the second step, catalyzed by the large alpha subunit of AS (TrpE) to produce anthranilate. In the absence of TrpG, TrpE can synthesize anthranilate directly from chorismate and high concentrations of ammonia. In Methanothermobacter thermautotrophicus (strain ATCC 29096 / DSM 1053 / JCM 10044 / NBRC 100330 / Delta H) (Methanobacterium thermoautotrophicum), this protein is Anthranilate synthase component 1 (trpE).